The chain runs to 405 residues: Palmitoyltransferase PFA5 (405 aa).

The next 5 membrane-spanning stretches (helical) occupy residues 12–32 (YIKLLVPICVVLVLAYLNYAI), 51–71 (IILWVLLGFFQLELLVYWVLI), 154–174 (LFFMKFMMGFLAFFIIVLIYC), 191–211 (FIVLFVMSGFWIIMIGCLFGI), and 310–330 (FYTLWRLAAAFVVFIIPFIDI). The DHHC domain maps to 111 to 161 (YYCSNSNSIKLERSFFSKDVGYNVIKFDHYCIWIGQPIGQDNYLFFMKFMM).

The protein belongs to the DHHC palmitoyltransferase family. PFA5 subfamily. In terms of processing, autopalmitoylated.

Its subcellular location is the membrane. The enzyme catalyses L-cysteinyl-[protein] + hexadecanoyl-CoA = S-hexadecanoyl-L-cysteinyl-[protein] + CoA. This chain is Palmitoyltransferase PFA5 (PFA5), found in Candida albicans (strain SC5314 / ATCC MYA-2876) (Yeast).